The chain runs to 177 residues: Cell division inhibitor SulA (177 aa).

The segment at alanine 112–tyrosine 118 is ftsZ binding. The tract at residues lysine 170–histidine 177 is lon protease binding.

It belongs to the SulA family. In terms of assembly, interacts with FtsZ. Post-translationally, is rapidly cleaved and degraded by the Lon protease once DNA damage is repaired.

Component of the SOS system and an inhibitor of cell division. Accumulation of SulA causes rapid cessation of cell division and the appearance of long, non-septate filaments. In the presence of GTP, binds a polymerization-competent form of FtsZ in a 1:1 ratio, thus inhibiting FtsZ polymerization and therefore preventing it from participating in the assembly of the Z ring. This mechanism prevents the premature segregation of damaged DNA to daughter cells during cell division. This is Cell division inhibitor SulA from Photorhabdus laumondii subsp. laumondii (strain DSM 15139 / CIP 105565 / TT01) (Photorhabdus luminescens subsp. laumondii).